Consider the following 143-residue polypeptide: Ninjurin-2 (143 aa).

The Extracellular segment spans residues Met1–Ala61. Residues Asn26–Met38 form a helix alpha1 region. A helix alpha2 region spans residues Leu39–Gly58. The helical transmembrane segment at Glu62–Leu93 threads the bilayer. The Cytoplasmic portion of the chain corresponds to Asn94–Glu97. A helical transmembrane segment spans residues Asn98–Gly127. Lys104 provides a ligand contact to cholesterol. Topologically, residues Ala128–Ile143 are extracellular.

It belongs to the ninjurin family. As to quaternary structure, homooligomer; in response to stimuli, homooligomerizes into filaments. In contrast to NINJ1, the filament is curved toward the intracellular space, preventing its circularization on a relatively flat membrane to mediate plasma membrane rupture: curvature is caused by cholesterol-binding at the cytoplasmic leaflet.

The protein resides in the cell membrane. Its function is as follows. Its role in unclear. In contrast to NINJ1 paralog, does not mediate plasma membrane rupture (cytolysis) downstream of necroptotic and pyroptotic programmed cell death. While it is able to oligomerize and form filaments, filaments are curved toward the intracellular space, preventing circularization to mediate plasma membrane rupture. May act as a homophilic transmembrane adhesion molecule involved in nerve regeneration. Promotes axonal growth. The chain is Ninjurin-2 (Ninj2) from Mus musculus (Mouse).